Here is a 428-residue protein sequence, read N- to C-terminus: Enolase 1 (428 aa).

The segment at 38 to 58 is disordered; it reads EVPSGASTGENEAVELRDGGS. Glutamine 163 is a binding site for (2R)-2-phosphoglycerate. The active-site Proton donor is glutamate 205. Mg(2+) is bound by residues aspartate 242, glutamate 286, and aspartate 313. 4 residues coordinate (2R)-2-phosphoglycerate: lysine 338, arginine 367, serine 368, and lysine 389. The active-site Proton acceptor is the lysine 338.

This sequence belongs to the enolase family. Requires Mg(2+) as cofactor.

The protein localises to the cytoplasm. It localises to the secreted. It is found in the cell surface. It catalyses the reaction (2R)-2-phosphoglycerate = phosphoenolpyruvate + H2O. It functions in the pathway carbohydrate degradation; glycolysis; pyruvate from D-glyceraldehyde 3-phosphate: step 4/5. In terms of biological role, catalyzes the reversible conversion of 2-phosphoglycerate (2-PG) into phosphoenolpyruvate (PEP). It is essential for the degradation of carbohydrates via glycolysis. The sequence is that of Enolase 1 from Lactobacillus gasseri (strain ATCC 33323 / DSM 20243 / BCRC 14619 / CIP 102991 / JCM 1131 / KCTC 3163 / NCIMB 11718 / NCTC 13722 / AM63).